The primary structure comprises 620 residues: Glutathione-regulated potassium-efflux system protein KefC (620 aa).

12 consecutive transmembrane segments (helical) span residues 4-24, 26-46, 54-74, 90-110, 114-134, 149-169, 178-198, 218-238, 270-290, 294-314, 327-347, and 359-379; these read HTLVQALIYLGSAALIVPIAV, LGLGSVLGYLIAGCIIGLWGL, SILHFAEIGVVLMLFIIGLEL, GALQMVICGGLLGLFCMLLGL, VAELIGMTLALSSTAIAMQAM, FAVLLFQDIAAILLVAMIPLL, MGAFALSALKVAGALVLVVLL, VFSAVALFLVFGFGLLLEEVG, GLLLGLFFIGVGMSIDFGTLI, LRIVILLLGFLIIKIAMLWLI, WFAVLLGQGSEFAFVVFGAAQ, and SLTLAVALSMAATPILLVILN. Residues 399–518 form the RCK N-terminal domain; it reads QPRVIIAGFG…AGVEKPERET (120 aa). A disordered region spans residues 597-620; it reads GWQGTEEGKHTGNMADEPETKPSS.

Belongs to the monovalent cation:proton antiporter 2 (CPA2) transporter (TC 2.A.37) family. KefC subfamily. In terms of assembly, homodimer. Interacts with the regulatory subunit KefF.

The protein resides in the cell inner membrane. In terms of biological role, pore-forming subunit of a potassium efflux system that confers protection against electrophiles. Catalyzes K(+)/H(+) antiport. The chain is Glutathione-regulated potassium-efflux system protein KefC from Shigella flexneri serotype 5b (strain 8401).